Reading from the N-terminus, the 883-residue chain is Puromycin-sensitive aminopeptidase (883 aa).

Substrate-binding positions include glutamate 125 and 265–269 (GAMEN). Histidine 301 provides a ligand contact to Zn(2+). Glutamate 302 serves as the catalytic Proton acceptor. Histidine 305 and glutamate 324 together coordinate Zn(2+).

The protein belongs to the peptidase M1 family. Requires Zn(2+) as cofactor.

The enzyme catalyses Release of an N-terminal amino acid, preferentially alanine, from a wide range of peptides, amides and arylamides.. Its activity is regulated as follows. Strongly inhibited by puromycin and DAMPAQ-22. Aminopeptidase with broad substrate specificity for several peptides. Involved in proteolytic events essential for cell growth and viability. Plays an essential role during prophase I of meiosis. Required for correct meiotic reconbination in both male and female gametophytes. The protein is Puromycin-sensitive aminopeptidase (MPA1) of Arabidopsis thaliana (Mouse-ear cress).